Reading from the N-terminus, the 381-residue chain is Queuine tRNA-ribosyltransferase (381 aa).

The Proton acceptor role is filled by aspartate 89. Substrate is bound by residues 89 to 93 (DSGGF), aspartate 143, glutamine 187, and glycine 214. Positions 245–251 (GVGKPED) are RNA binding. Catalysis depends on aspartate 264, which acts as the Nucleophile. The segment at 269–273 (TRNAR) is RNA binding; important for wobble base 34 recognition. Zn(2+)-binding residues include cysteine 302, cysteine 304, cysteine 307, and histidine 333.

The protein belongs to the queuine tRNA-ribosyltransferase family. As to quaternary structure, homodimer. Within each dimer, one monomer is responsible for RNA recognition and catalysis, while the other monomer binds to the replacement base PreQ1. Zn(2+) is required as a cofactor.

The enzyme catalyses 7-aminomethyl-7-carbaguanine + guanosine(34) in tRNA = 7-aminomethyl-7-carbaguanosine(34) in tRNA + guanine. It participates in tRNA modification; tRNA-queuosine biosynthesis. In terms of biological role, catalyzes the base-exchange of a guanine (G) residue with the queuine precursor 7-aminomethyl-7-deazaguanine (PreQ1) at position 34 (anticodon wobble position) in tRNAs with GU(N) anticodons (tRNA-Asp, -Asn, -His and -Tyr). Catalysis occurs through a double-displacement mechanism. The nucleophile active site attacks the C1' of nucleotide 34 to detach the guanine base from the RNA, forming a covalent enzyme-RNA intermediate. The proton acceptor active site deprotonates the incoming PreQ1, allowing a nucleophilic attack on the C1' of the ribose to form the product. After dissociation, two additional enzymatic reactions on the tRNA convert PreQ1 to queuine (Q), resulting in the hypermodified nucleoside queuosine (7-(((4,5-cis-dihydroxy-2-cyclopenten-1-yl)amino)methyl)-7-deazaguanosine). The protein is Queuine tRNA-ribosyltransferase of Pectobacterium carotovorum subsp. carotovorum (strain PC1).